The sequence spans 468 residues: UDP-N-acetylmuramoylalanine--D-glutamate ligase (468 aa).

117–123 lines the ATP pocket; sequence GTDGKTT.

The protein belongs to the MurCDEF family.

It is found in the cytoplasm. It catalyses the reaction UDP-N-acetyl-alpha-D-muramoyl-L-alanine + D-glutamate + ATP = UDP-N-acetyl-alpha-D-muramoyl-L-alanyl-D-glutamate + ADP + phosphate + H(+). The protein operates within cell wall biogenesis; peptidoglycan biosynthesis. In terms of biological role, cell wall formation. Catalyzes the addition of glutamate to the nucleotide precursor UDP-N-acetylmuramoyl-L-alanine (UMA). This is UDP-N-acetylmuramoylalanine--D-glutamate ligase from Chloroherpeton thalassium (strain ATCC 35110 / GB-78).